Consider the following 208-residue polypeptide: MANPKADRLIQFLTEQGITSPQVLAAIHALPREFFVAPAMMHQAYDNNALPIGQGQTISQPYIVAKMTELLALTPETKVLEIGTGSGYQTAVLAKLVNHVFTVERIKTLQWDAKRRLKQLDIYNVSTKHGDGWQGWPARGPFDAILVTAAAAKVPQSLLDQLAEGGRMVIPVGEDEQYLYKIVRQGGQFISERVEAVRFVPLVAGDLA.

Ser59 is a catalytic residue.

The protein belongs to the methyltransferase superfamily. L-isoaspartyl/D-aspartyl protein methyltransferase family.

It localises to the cytoplasm. The catalysed reaction is [protein]-L-isoaspartate + S-adenosyl-L-methionine = [protein]-L-isoaspartate alpha-methyl ester + S-adenosyl-L-homocysteine. Its function is as follows. Catalyzes the methyl esterification of L-isoaspartyl residues in peptides and proteins that result from spontaneous decomposition of normal L-aspartyl and L-asparaginyl residues. It plays a role in the repair and/or degradation of damaged proteins. The polypeptide is Protein-L-isoaspartate O-methyltransferase (Vibrio cholerae serotype O1 (strain ATCC 39541 / Classical Ogawa 395 / O395)).